The sequence spans 656 residues: Acetyl-coenzyme A synthetase (656 aa).

Residues 198–201 and Thr-316 contribute to the CoA site; that span reads RGGR. ATP-binding positions include 392–394, 416–421, Asp-507, and Arg-522; these read GEP and DTFWQT. A CoA-binding site is contributed by Ser-530. Residue Arg-533 coordinates ATP. Residues Val-544, His-546, and Val-549 each contribute to the Mg(2+) site. Arg-591 provides a ligand contact to CoA. Lys-616 is modified (N6-acetyllysine).

Belongs to the ATP-dependent AMP-binding enzyme family. It depends on Mg(2+) as a cofactor. Post-translationally, acetylated. Deacetylation by the SIR2-homolog deacetylase activates the enzyme.

It carries out the reaction acetate + ATP + CoA = acetyl-CoA + AMP + diphosphate. In terms of biological role, catalyzes the conversion of acetate into acetyl-CoA (AcCoA), an essential intermediate at the junction of anabolic and catabolic pathways. AcsA undergoes a two-step reaction. In the first half reaction, AcsA combines acetate with ATP to form acetyl-adenylate (AcAMP) intermediate. In the second half reaction, it can then transfer the acetyl group from AcAMP to the sulfhydryl group of CoA, forming the product AcCoA. This is Acetyl-coenzyme A synthetase from Rhodobacter capsulatus (strain ATCC BAA-309 / NBRC 16581 / SB1003).